The primary structure comprises 233 residues: tRNA (guanine-N(7)-)-methyltransferase (233 aa).

The disordered stretch occupies residues 1 to 22; it reads MIDENHPMRAAGNFFGRRHGKP. S-adenosyl-L-methionine is bound by residues glutamate 64, glutamate 89, aspartate 116, and aspartate 138. Residue aspartate 138 is part of the active site. Residues lysine 142, aspartate 174, and 212–215 each bind substrate; that span reads TRYE.

It belongs to the class I-like SAM-binding methyltransferase superfamily. TrmB family.

The catalysed reaction is guanosine(46) in tRNA + S-adenosyl-L-methionine = N(7)-methylguanosine(46) in tRNA + S-adenosyl-L-homocysteine. It functions in the pathway tRNA modification; N(7)-methylguanine-tRNA biosynthesis. Functionally, catalyzes the formation of N(7)-methylguanine at position 46 (m7G46) in tRNA. The protein is tRNA (guanine-N(7)-)-methyltransferase of Brucella melitensis biotype 1 (strain ATCC 23456 / CCUG 17765 / NCTC 10094 / 16M).